The following is a 306-amino-acid chain: Tyrosine recombinase XerD (306 aa).

A Core-binding (CB) domain is found at 1–83 (MGFIAQFLEM…TIKSYYEFLI (83 aa)). Residues 104–299 (KLPEILSIAQ…QTNHLKKALL (196 aa)) form the Tyr recombinase domain. Residues R145, K176, H251, R254, and H277 contribute to the active site. The active-site O-(3'-phospho-DNA)-tyrosine intermediate is the Y286.

The protein belongs to the 'phage' integrase family. XerD subfamily. Forms a cyclic heterotetrameric complex composed of two molecules of XerC and two molecules of XerD.

Its subcellular location is the cytoplasm. Functionally, site-specific tyrosine recombinase, which acts by catalyzing the cutting and rejoining of the recombining DNA molecules. The XerC-XerD complex is essential to convert dimers of the bacterial chromosome into monomers to permit their segregation at cell division. It also contributes to the segregational stability of plasmids. This chain is Tyrosine recombinase XerD, found in Rickettsia conorii (strain ATCC VR-613 / Malish 7).